The primary structure comprises 132 residues: ATP synthase epsilon chain (132 aa).

This sequence belongs to the ATPase epsilon chain family. In terms of assembly, F-type ATPases have 2 components, CF(1) - the catalytic core - and CF(0) - the membrane proton channel. CF(1) has five subunits: alpha(3), beta(3), gamma(1), delta(1), epsilon(1). CF(0) has four main subunits: a, b, b' and c.

It localises to the cellular chromatophore membrane. Functionally, produces ATP from ADP in the presence of a proton gradient across the membrane. In Rhodobacter capsulatus (Rhodopseudomonas capsulata), this protein is ATP synthase epsilon chain (atpC).